We begin with the raw amino-acid sequence, 321 residues long: Phospho-N-acetylmuramoyl-pentapeptide-transferase (321 aa).

10 helical membrane-spanning segments follow: residues 1-21 (MIFVYALLALVITFVLVPVLI), 50-70 (MGGLTFLLSIVITSLVAIIFV), 76-96 (IILLLFVTIGFGLIGFIDDYI), 112-132 (FLAQIGIAIIFFVLSNVFHLV), 140-160 (IPFTNVAIPLSFAYVIFIVFW), 176-196 (GLATGLSIIGFTMYAIMSFVL), 200-220 (AIGIFCIIMLFALLGFLPYNI), 225-245 (VFMGDTGSLALGGIFATISIM), 250-270 (LSLIFIGLVFVIETLSVMLQV), and 300-320 (VVTVFWAVGLISGLIGLWIGV).

The protein belongs to the glycosyltransferase 4 family. MraY subfamily. It depends on Mg(2+) as a cofactor.

It localises to the cell membrane. It carries out the reaction UDP-N-acetyl-alpha-D-muramoyl-L-alanyl-gamma-D-glutamyl-L-lysyl-D-alanyl-D-alanine + di-trans,octa-cis-undecaprenyl phosphate = Mur2Ac(oyl-L-Ala-gamma-D-Glu-L-Lys-D-Ala-D-Ala)-di-trans,octa-cis-undecaprenyl diphosphate + UMP. It functions in the pathway cell wall biogenesis; peptidoglycan biosynthesis. In terms of biological role, catalyzes the initial step of the lipid cycle reactions in the biosynthesis of the cell wall peptidoglycan: transfers peptidoglycan precursor phospho-MurNAc-pentapeptide from UDP-MurNAc-pentapeptide onto the lipid carrier undecaprenyl phosphate, yielding undecaprenyl-pyrophosphoryl-MurNAc-pentapeptide, known as lipid I. This chain is Phospho-N-acetylmuramoyl-pentapeptide-transferase, found in Staphylococcus aureus (strain Mu50 / ATCC 700699).